Reading from the N-terminus, the 103-residue chain is Putative membrane protein insertion efficiency factor (103 aa).

Belongs to the UPF0161 family.

The protein resides in the cell membrane. Could be involved in insertion of integral membrane proteins into the membrane. In Clavibacter michiganensis subsp. michiganensis (strain NCPPB 382), this protein is Putative membrane protein insertion efficiency factor.